A 603-amino-acid polypeptide reads, in one-letter code: Laccase 1 (603 aa).

The first 20 residues, 1–20, serve as a signal peptide directing secretion; sequence MSRFARLLLIVALFFTNAWA. Plastocyanin-like domains follow at residues 66-108 and 159-349; these read QRPI…IHIR and LVVS…MRIP. Cu cation is bound by residues H90 and H92. N246, N269, N434, and N474 each carry an N-linked (GlcNAc...) asparagine glycan. The Plastocyanin-like 3 domain maps to 460–588; the sequence is TRDTENDGLV…GGMGIAILDG (129 aa). Cu cation contacts are provided by H496, H499, and H501. An N-linked (GlcNAc...) asparagine glycan is attached at N516. 4 residues coordinate Cu cation: H570, C571, H572, and H576.

It belongs to the multicopper oxidase family. It depends on Cu cation as a cofactor.

The protein resides in the cell surface. It participates in pigment biosynthesis. Its function is as follows. Laccase; part of the Pks1 gene cluster that mediates the biosynthesis of an anthraquinone derivative pigment that contributes to conidial pigmentation that provides protection from UV radiation, heat and cold stress. The polyketide synthase Pks1 produces 1-acetyl-2,4,6,8-tetrahydroxy-9,10-anthraquinone though condensation of acetyl-CoA with malonyl-CoA. The dehydratase EthD and the laccase Mlac1 further convert the anthraquinone derivative into the final conidial pigment. The polypeptide is Laccase 1 (Metarhizium anisopliae (Entomophthora anisopliae)).